Here is a 550-residue protein sequence, read N- to C-terminus: Glucose-6-phosphate isomerase (550 aa).

The active-site Proton donor is glutamate 356. Residues histidine 387 and lysine 515 contribute to the active site.

Belongs to the GPI family.

The protein localises to the cytoplasm. The catalysed reaction is alpha-D-glucose 6-phosphate = beta-D-fructose 6-phosphate. Its pathway is carbohydrate biosynthesis; gluconeogenesis. It participates in carbohydrate degradation; glycolysis; D-glyceraldehyde 3-phosphate and glycerone phosphate from D-glucose: step 2/4. Its function is as follows. Catalyzes the reversible isomerization of glucose-6-phosphate to fructose-6-phosphate. The protein is Glucose-6-phosphate isomerase of Vibrio atlanticus (strain LGP32) (Vibrio splendidus (strain Mel32)).